An 881-amino-acid chain; its full sequence is DNA replication helicase (881 aa).

Residues methionine 1–glutamate 32 form a disordered region. The span at threonine 13–glutamate 32 shows a compositional bias: basic and acidic residues. Residue glycine 105–serine 112 coordinates ATP.

It belongs to the herpesviridae helicase family. As to quaternary structure, associates with the primase and the primase-associated factor to form the helicase-primase complex.

Its subcellular location is the host nucleus. In terms of biological role, component of the helicase/primase complex. Unwinds the DNA at the replication forks and generates single-stranded DNA for both leading and lagging strand synthesis. The primase synthesizes short RNA primers on the lagging strand that the polymerase elongates using dNTPs. Possesses helicase-like motifs and therefore may act as the helicase subunit of the complex. This chain is DNA replication helicase, found in Equus caballus (Horse).